A 451-amino-acid chain; its full sequence is Phosphoglucosamine mutase (451 aa).

Ser101 (phosphoserine intermediate) is an active-site residue. Ser101, Asp240, Asp242, and Asp244 together coordinate Mg(2+). Ser101 carries the post-translational modification Phosphoserine.

This sequence belongs to the phosphohexose mutase family. Requires Mg(2+) as cofactor. In terms of processing, activated by phosphorylation.

The enzyme catalyses alpha-D-glucosamine 1-phosphate = D-glucosamine 6-phosphate. Functionally, catalyzes the conversion of glucosamine-6-phosphate to glucosamine-1-phosphate. This chain is Phosphoglucosamine mutase, found in Alkalilimnicola ehrlichii (strain ATCC BAA-1101 / DSM 17681 / MLHE-1).